The following is a 363-amino-acid chain: 3-isopropylmalate dehydrogenase (363 aa).

NAD(+) is bound at residue 78 to 91 (GKKWDYLPIESRPE). Substrate contacts are provided by Arg99, Arg109, Arg138, and Asp227. Positions 227, 251, and 255 each coordinate Mg(2+). 285–297 (GSAPDIEGKNIAN) provides a ligand contact to NAD(+).

The protein belongs to the isocitrate and isopropylmalate dehydrogenases family. LeuB type 1 subfamily. In terms of assembly, homodimer. Mg(2+) is required as a cofactor. Requires Mn(2+) as cofactor.

It localises to the cytoplasm. The catalysed reaction is (2R,3S)-3-isopropylmalate + NAD(+) = 4-methyl-2-oxopentanoate + CO2 + NADH. The protein operates within amino-acid biosynthesis; L-leucine biosynthesis; L-leucine from 3-methyl-2-oxobutanoate: step 3/4. Its function is as follows. Catalyzes the oxidation of 3-carboxy-2-hydroxy-4-methylpentanoate (3-isopropylmalate) to 3-carboxy-4-methyl-2-oxopentanoate. The product decarboxylates to 4-methyl-2 oxopentanoate. This Buchnera aphidicola subsp. Schizaphis graminum (strain Sg) protein is 3-isopropylmalate dehydrogenase.